Consider the following 360-residue polypeptide: Histidinol-phosphate aminotransferase (360 aa).

N6-(pyridoxal phosphate)lysine is present on lysine 211.

Belongs to the class-II pyridoxal-phosphate-dependent aminotransferase family. Histidinol-phosphate aminotransferase subfamily. As to quaternary structure, homodimer. The cofactor is pyridoxal 5'-phosphate.

It catalyses the reaction L-histidinol phosphate + 2-oxoglutarate = 3-(imidazol-4-yl)-2-oxopropyl phosphate + L-glutamate. It participates in amino-acid biosynthesis; L-histidine biosynthesis; L-histidine from 5-phospho-alpha-D-ribose 1-diphosphate: step 7/9. The polypeptide is Histidinol-phosphate aminotransferase (Sodalis glossinidius (strain morsitans)).